The following is a 174-amino-acid chain: Secretory-abundant heat soluble protein 68234 (174 aa).

Residues 1 to 19 form the signal peptide; sequence MARFLVALALFGVVAMTAA. The interval 26-57 is SAHS-c1; that stretch reads EWSGKPWLGKFVAEVTDKSENWEAFVDALGLP. The segment at 72–100 is SAHS-c2; it reads YKQGDHYHHIFALPDKNFEKDIEFTLGQE. The interval 113 to 162 is SAHS-c3; that stretch reads KYSEDGEKLVADVSIPTKGKTIRSEYEVQGDQLIKTYKTGDIVAKKWFKK.

This sequence belongs to the Secretory-abundant heat soluble protein (SAHS) family.

It is found in the secreted. Secreted heat soluble protein acting as a molecular shield in water-deficient condition. Tardigrade-specific intrinsically disordered proteins (TDPs) are essential for desiccation tolerance by forming non-crystalline amorphous solids upon desiccation, and this vitrified state mirrors their protective capabilities. The protein is Secretory-abundant heat soluble protein 68234 of Hypsibius exemplaris (Freshwater tardigrade).